The chain runs to 114 residues: ATP-dependent Clp protease adapter protein ClpS (114 aa).

The protein belongs to the ClpS family. In terms of assembly, binds to the N-terminal domain of the chaperone ClpA.

Its function is as follows. Involved in the modulation of the specificity of the ClpAP-mediated ATP-dependent protein degradation. The polypeptide is ATP-dependent Clp protease adapter protein ClpS (Bdellovibrio bacteriovorus (strain ATCC 15356 / DSM 50701 / NCIMB 9529 / HD100)).